The chain runs to 348 residues: Phosphoribosylformylglycinamidine cyclo-ligase (348 aa).

It belongs to the AIR synthase family.

It localises to the cytoplasm. It carries out the reaction 2-formamido-N(1)-(5-O-phospho-beta-D-ribosyl)acetamidine + ATP = 5-amino-1-(5-phospho-beta-D-ribosyl)imidazole + ADP + phosphate + H(+). It functions in the pathway purine metabolism; IMP biosynthesis via de novo pathway; 5-amino-1-(5-phospho-D-ribosyl)imidazole from N(2)-formyl-N(1)-(5-phospho-D-ribosyl)glycinamide: step 2/2. The polypeptide is Phosphoribosylformylglycinamidine cyclo-ligase (Geotalea daltonii (strain DSM 22248 / JCM 15807 / FRC-32) (Geobacter daltonii)).